Consider the following 250-residue polypeptide: Coproheme decarboxylase (250 aa).

Fe-coproporphyrin III-binding positions include arginine 131, 145–149 (YPMNK), histidine 172, and glutamine 185. Tyrosine 145 is an active-site residue.

This sequence belongs to the ChdC family. Type 1 subfamily. Fe-coproporphyrin III serves as cofactor.

It carries out the reaction Fe-coproporphyrin III + 2 H2O2 + 2 H(+) = heme b + 2 CO2 + 4 H2O. The catalysed reaction is Fe-coproporphyrin III + H2O2 + H(+) = harderoheme III + CO2 + 2 H2O. It catalyses the reaction harderoheme III + H2O2 + H(+) = heme b + CO2 + 2 H2O. Its pathway is porphyrin-containing compound metabolism; protoheme biosynthesis. In terms of biological role, involved in coproporphyrin-dependent heme b biosynthesis. Catalyzes the decarboxylation of Fe-coproporphyrin III (coproheme) to heme b (protoheme IX), the last step of the pathway. The reaction occurs in a stepwise manner with a three-propionate intermediate. In Staphylococcus aureus (strain MSSA476), this protein is Coproheme decarboxylase.